The sequence spans 242 residues: Exosome complex component ski6 (242 aa).

Belongs to the RNase PH family. Component of the RNA exosome complex. Specifically part of the catalytically inactive RNA exosome core complex (Exo-9) which may associate with the catalytic subunits rrp6 and dis3 in cytoplasmic- and nuclear-specific RNA exosome complex forms. Exo-9 is formed by a hexameric base ring of RNase PH domain-containing subunits and a cap ring consisting of csl4, rrp4 and rrp40.

It is found in the cytoplasm. The protein localises to the nucleus. Its subcellular location is the nucleolus. Functionally, non-catalytic component of the RNA exosome complex which has 3'-&gt;5' exoribonuclease activity and participates in a multitude of cellular RNA processing and degradation events. In the nucleus, the RNA exosome complex is involved in proper maturation of stable RNA species such as rRNA, snRNA and snoRNA, in the elimination of RNA processing by-products and non-coding 'pervasive' transcripts, such as antisense RNA species and cryptic unstable transcripts (CUTs), and of mRNAs with processing defects, thereby limiting or excluding their export to the cytoplasm. In the cytoplasm, the RNA exosome complex is involved in general mRNA turnover and in RNA surveillance pathways, preventing translation of aberrant mRNAs. The catalytic inactive RNA exosome core complex of 9 subunits (Exo-9) is proposed to play a pivotal role in the binding and presentation of RNA for ribonucleolysis, and to serve as a scaffold for the association with catalytic subunits and accessory proteins or complexes. ski6 is part of the hexameric ring of RNase PH domain-containing subunits proposed to form a central channel which threads RNA substrates for degradation. The protein is Exosome complex component ski6 (ski6) of Schizosaccharomyces pombe (strain 972 / ATCC 24843) (Fission yeast).